Here is a 445-residue protein sequence, read N- to C-terminus: Glutamate--tRNA ligase 2 (445 aa).

The short motif at 10–20 is the 'HIGH' region element; it reads PSPTGMLHVGN. A 'KMSKS' region motif is present at residues 240 to 244; the sequence is KISKR. Residue K243 participates in ATP binding.

This sequence belongs to the class-I aminoacyl-tRNA synthetase family. Glutamate--tRNA ligase type 1 subfamily. In terms of assembly, monomer.

The protein resides in the cytoplasm. It carries out the reaction tRNA(Glu) + L-glutamate + ATP = L-glutamyl-tRNA(Glu) + AMP + diphosphate. Functionally, catalyzes the attachment of glutamate to tRNA(Glu) in a two-step reaction: glutamate is first activated by ATP to form Glu-AMP and then transferred to the acceptor end of tRNA(Glu). The polypeptide is Glutamate--tRNA ligase 2 (Rickettsia canadensis (strain McKiel)).